Here is a 398-residue protein sequence, read N- to C-terminus: Elongation factor Tu (398 aa).

Residues Lys10–Glu207 form the tr-type G domain. The G1 stretch occupies residues Gly19–Thr26. Gly19 to Thr26 serves as a coordination point for GTP. Thr26 contacts Mg(2+). Residues Gly63–Asn67 are G2. The tract at residues Asp84–Gly87 is G3. GTP is bound by residues Asp84 to His88 and Asn139 to Asp142. The segment at Asn139–Asp142 is G4. Residues Ser177–Leu179 are G5.

This sequence belongs to the TRAFAC class translation factor GTPase superfamily. Classic translation factor GTPase family. EF-Tu/EF-1A subfamily. As to quaternary structure, monomer.

It localises to the cytoplasm. It catalyses the reaction GTP + H2O = GDP + phosphate + H(+). GTP hydrolase that promotes the GTP-dependent binding of aminoacyl-tRNA to the A-site of ribosomes during protein biosynthesis. The polypeptide is Elongation factor Tu (Streptococcus equi subsp. zooepidemicus (strain MGCS10565)).